Consider the following 146-residue polypeptide: uncharacterized protein (146 aa).

This is an uncharacterized protein from Methanothermobacter thermautotrophicus (Methanobacterium thermoformicicum).